The following is a 467-amino-acid chain: Sugar transporter ERD6-like 11 (467 aa).

12 helical membrane-spanning segments follow: residues 26–46 (ITACVILSTFVAVCSAFSYGC), 75–95 (FLNVGGAVGALFSGQLAVILG), 105–125 (FFCVFGWLSIAFAKNVFWLDL), 128–148 (ISLGIGVGLISYVVPVYIAEI), 155–177 (GAFTASNQLLQNSGVSLIYFFGT), 183–203 (VMAVIGAIPCILQTIGIFFIP), 266–286 (LVVGIGLMLIQQLSGASGITY), 301–321 (LGSMIFGVFVIPKALVGLILV), 328–348 (PLLLASAVGMSIGSLLIGVSF), 359–379 (LIPIFVFVNILVYFGCFAFGI), 402–422 (IVALTSWTSGWFVSYAFNFMF), and 428–448 (GTFYIFAAVGGMSFIFIWMLV).

This sequence belongs to the major facilitator superfamily. Sugar transporter (TC 2.A.1.1) family.

Its subcellular location is the membrane. Functionally, sugar transporter. The protein is Sugar transporter ERD6-like 11 of Arabidopsis thaliana (Mouse-ear cress).